The following is a 361-amino-acid chain: DNA double-strand break repair protein Mre11 (361 aa).

Mn(2+) is bound by residues aspartate 7, histidine 9, aspartate 48, and asparagine 83. Histidine 84 functions as the Proton donor in the catalytic mechanism. Mn(2+)-binding residues include histidine 176, histidine 204, and histidine 206.

Belongs to the MRE11/RAD32 family. Homodimer. Forms a heterotetramer composed of two Mre11 subunits and two Rad50 subunits. It depends on Mn(2+) as a cofactor.

Its activity is regulated as follows. Nuclease activity is regulated by Rad50. Its function is as follows. Part of the Rad50/Mre11 complex, which is involved in the early steps of DNA double-strand break (DSB) repair. The complex may facilitate opening of the processed DNA ends to aid in the recruitment of HerA and NurA. Mre11 binds to DSB ends and has both double-stranded 3'-5' exonuclease activity and single-stranded endonuclease activity. The protein is DNA double-strand break repair protein Mre11 of Nanoarchaeum equitans (strain Kin4-M).